The following is a 78-amino-acid chain: Conotoxin Cal6.3a (78 aa).

Residues 1–21 (MRFLHFLIVAVLLASFMESGA) form the signal peptide. Positions 22 to 26 (MPRNP) are excised as a propeptide. 3 disulfides stabilise this stretch: cysteine 38–cysteine 49, cysteine 41–cysteine 53, and cysteine 48–cysteine 56. A Glutamine amide modification is found at glutamine 76.

In terms of tissue distribution, expressed by the venom duct.

The protein localises to the secreted. Its function is as follows. Probable neurotoxin with unknown target. Possibly targets ion channels. The polypeptide is Conotoxin Cal6.3a (Californiconus californicus (California cone)).